The primary structure comprises 85 residues: uncharacterized protein (85 aa).

Belongs to the YciI family.

This is an uncharacterized protein from Bacillus subtilis (strain 168).